A 1136-amino-acid chain; its full sequence is Nitric oxide synthase, inducible (1136 aa).

2 residues coordinate Zn(2+): C107 and C112. C197 provides a ligand contact to heme b. L-arginine is bound by residues Q260, W369, Y370, and E374. R378, V459, W460, and F473 together coordinate (6R)-L-erythro-5,6,7,8-tetrahydrobiopterin. A heme b-binding site is contributed by Y488. A calmodulin-binding region spans residues 512 to 532 (LSILAKAVLLASLLLQKTMAA). Positions 536–674 (VTVIYATETG…AFRTWAVTAF (139 aa)) constitute a Flavodoxin-like domain. Residues T542, E543, T544, K546, S547, S588, T589, S625, C632, E658, and Q662 each contribute to the FMN site. Positions 727 to 967 (KNVIPMKLKF…VRSADGFRLP (241 aa)) constitute an FAD-binding FR-type domain. R747 contacts NADP(+). Residues H769, R903, Y905, S906, T921, A923, Y927, V940, C941, and S942 each coordinate FAD. 8 residues coordinate NADP(+): T981, R1014, S1043, R1044, K1050, Y1052, Q1054, and D1087.

This sequence belongs to the NOS family. As to quaternary structure, homodimer. The cofactor is heme b. FAD is required as a cofactor. It depends on FMN as a cofactor. (6R)-L-erythro-5,6,7,8-tetrahydrobiopterin serves as cofactor.

It localises to the cytoplasm. The protein resides in the cytosol. The catalysed reaction is 2 L-arginine + 3 NADPH + 4 O2 + H(+) = 2 L-citrulline + 2 nitric oxide + 3 NADP(+) + 4 H2O. Its activity is regulated as follows. Not stimulated by calcium/calmodulin. In terms of biological role, produces nitric oxide (NO) which is a messenger molecule with diverse functions throughout the body. NO may serve as both a paracrine and autocrine signal for modulating osteoclast bone resorption. Also has nitrosylase activity and mediates cysteine S-nitrosylation of cytoplasmic target proteins such COX2. In Gallus gallus (Chicken), this protein is Nitric oxide synthase, inducible (NOS2).